Reading from the N-terminus, the 141-residue chain is Large ribosomal subunit protein uL11 (141 aa).

It belongs to the universal ribosomal protein uL11 family. Part of the ribosomal stalk of the 50S ribosomal subunit. Interacts with L10 and the large rRNA to form the base of the stalk. L10 forms an elongated spine to which L12 dimers bind in a sequential fashion forming a multimeric L10(L12)X complex. In terms of processing, one or more lysine residues are methylated.

Functionally, forms part of the ribosomal stalk which helps the ribosome interact with GTP-bound translation factors. This chain is Large ribosomal subunit protein uL11, found in Synechococcus sp. (strain CC9311).